We begin with the raw amino-acid sequence, 241 residues long: Small ribosomal subunit protein uS2 (241 aa).

The protein belongs to the universal ribosomal protein uS2 family.

The chain is Small ribosomal subunit protein uS2 from Photorhabdus laumondii subsp. laumondii (strain DSM 15139 / CIP 105565 / TT01) (Photorhabdus luminescens subsp. laumondii).